A 916-amino-acid chain; its full sequence is Protein translocase subunit SecA (916 aa).

ATP is bound by residues glutamine 87, 105 to 109 (GEGKT), and aspartate 507. Zn(2+) is bound by residues cysteine 900, cysteine 902, cysteine 911, and histidine 912.

The protein belongs to the SecA family. Monomer and homodimer. Part of the essential Sec protein translocation apparatus which comprises SecA, SecYEG and auxiliary proteins SecDF-YajC and YidC. Requires Zn(2+) as cofactor.

The protein localises to the cell inner membrane. It is found in the cytoplasm. It carries out the reaction ATP + H2O + cellular proteinSide 1 = ADP + phosphate + cellular proteinSide 2.. Functionally, part of the Sec protein translocase complex. Interacts with the SecYEG preprotein conducting channel. Has a central role in coupling the hydrolysis of ATP to the transfer of proteins into and across the cell membrane, serving both as a receptor for the preprotein-SecB complex and as an ATP-driven molecular motor driving the stepwise translocation of polypeptide chains across the membrane. The sequence is that of Protein translocase subunit SecA from Neisseria gonorrhoeae (strain NCCP11945).